A 353-amino-acid chain; its full sequence is Guanine nucleotide-binding protein subunit alpha (353 aa).

Gly2 carries N-myristoyl glycine lipidation. Cys3 is lipidated: S-palmitoyl cysteine. One can recognise a G-alpha domain in the interval 32–353; that stretch reads NEIKMLLLGA…QENLRLCGLI (322 aa). A G1 motif region spans residues 35-48; sequence KMLLLGAGESGKST. GTP is bound by residues Glu43, Ser44, Gly45, Lys46, Ser47, Thr48, Asp150, Leu175, Thr181, Gly203, Asn269, Lys270, Asp272, and Ala325. Ser47 lines the Mg(2+) pocket. Residues 173–181 are G2 motif; it reads DVLRSRVKT. Thr181 contributes to the Mg(2+) binding site. The tract at residues 196–205 is G3 motif; that stretch reads YRMFDVGGQR. The G4 motif stretch occupies residues 265-272; that stretch reads ILFLNKID. Residues 323–328 form a G5 motif region; sequence TCATDT.

It belongs to the G-alpha family. G(q) subfamily. G proteins are composed of 3 units; alpha, beta and gamma. The alpha chain contains the guanine nucleotide binding site. Requires Mg(2+) as cofactor.

Functionally, guanine nucleotide-binding proteins (G proteins) are involved as modulators or transducers in various transmembrane signaling systems. Involved in the mating pathway. The chain is Guanine nucleotide-binding protein subunit alpha (CGA1) from Cochliobolus heterostrophus (strain C4 / ATCC 48331 / race T) (Southern corn leaf blight fungus).